Consider the following 481-residue polypeptide: Coniferyl aldehyde dehydrogenase (481 aa).

Catalysis depends on residues glutamate 221 and cysteine 255.

This sequence belongs to the aldehyde dehydrogenase family. In terms of assembly, homodimer.

The catalysed reaction is (E)-coniferaldehyde + NADP(+) + H2O = (E)-ferulate + NADPH + 2 H(+). It catalyses the reaction (E)-coniferaldehyde + NAD(+) + H2O = (E)-ferulate + NADH + 2 H(+). In terms of biological role, catalyzes the NAD(+)-dependent oxidation of coniferyl aldehyde to ferulic acid and which is induced during growth with eugenol as the carbon source. The chain is Coniferyl aldehyde dehydrogenase (calB) from Pseudomonas sp. (strain HR199 / DSM 7063).